The primary structure comprises 168 residues: MSVCTSPSDEGLTRRLIELTEAGLPLVADPWAWLAEELGIDVDDTLALLQRLQADGAIRRVAAIPNHYRLGYRHNGMTVWDVDDAEIARLGALIGAQPFVSHCYRRPRQEGWPYNLFAMVHGRDASDIEAYRNQIRALLGNACRANDMLVSSRILKKTGLRLAGQRRV.

The protein belongs to the Ahb/Nir family. Probably forms a complex composed of NirD, NirL, NirG and NirH. All proteins are required for the total conversion of siroheme to didecarboxysiroheme.

It carries out the reaction siroheme + 2 H(+) = 12,18-didecarboxysiroheme + 2 CO2. The protein operates within porphyrin-containing compound metabolism. Functionally, involved in heme d1 biosynthesis. Catalyzes the decarboxylation of siroheme into didecarboxysiroheme. The polypeptide is Siroheme decarboxylase NirH subunit (Stutzerimonas stutzeri (Pseudomonas stutzeri)).